Consider the following 71-residue polypeptide: Translation initiation factor IF-1 (71 aa).

One can recognise an S1-like domain in the interval 1-71 (MSKDDLIQFT…LTKGRVIHRH (71 aa)).

This sequence belongs to the IF-1 family. In terms of assembly, component of the 30S ribosomal translation pre-initiation complex which assembles on the 30S ribosome in the order IF-2 and IF-3, IF-1 and N-formylmethionyl-tRNA(fMet); mRNA recruitment can occur at any time during PIC assembly.

It localises to the cytoplasm. Its function is as follows. One of the essential components for the initiation of protein synthesis. Stabilizes the binding of IF-2 and IF-3 on the 30S subunit to which N-formylmethionyl-tRNA(fMet) subsequently binds. Helps modulate mRNA selection, yielding the 30S pre-initiation complex (PIC). Upon addition of the 50S ribosomal subunit IF-1, IF-2 and IF-3 are released leaving the mature 70S translation initiation complex. In Rickettsia canadensis (strain McKiel), this protein is Translation initiation factor IF-1.